The chain runs to 304 residues: ATP synthase gamma chain (304 aa).

Belongs to the ATPase gamma chain family. As to quaternary structure, F-type ATPases have 2 components, CF(1) - the catalytic core - and CF(0) - the membrane proton channel. CF(1) has five subunits: alpha(3), beta(3), gamma(1), delta(1), epsilon(1). CF(0) has three main subunits: a, b and c.

It localises to the cell membrane. Functionally, produces ATP from ADP in the presence of a proton gradient across the membrane. The gamma chain is believed to be important in regulating ATPase activity and the flow of protons through the CF(0) complex. The polypeptide is ATP synthase gamma chain (Mycolicibacterium paratuberculosis (strain ATCC BAA-968 / K-10) (Mycobacterium paratuberculosis)).